Here is a 424-residue protein sequence, read N- to C-terminus: Enolase (424 aa).

Q164 contributes to the (2R)-2-phosphoglycerate binding site. E206 serves as the catalytic Proton donor. D243, E284, and D311 together coordinate Mg(2+). The (2R)-2-phosphoglycerate site is built by K336, R365, S366, and K387. Residue K336 is the Proton acceptor of the active site.

Belongs to the enolase family. It depends on Mg(2+) as a cofactor.

It is found in the cytoplasm. The protein localises to the secreted. Its subcellular location is the cell surface. The catalysed reaction is (2R)-2-phosphoglycerate = phosphoenolpyruvate + H2O. Its pathway is carbohydrate degradation; glycolysis; pyruvate from D-glyceraldehyde 3-phosphate: step 4/5. Functionally, catalyzes the reversible conversion of 2-phosphoglycerate (2-PG) into phosphoenolpyruvate (PEP). It is essential for the degradation of carbohydrates via glycolysis. The polypeptide is Enolase (Wolbachia sp. subsp. Drosophila simulans (strain wRi)).